Reading from the N-terminus, the 350-residue chain is Transcription factor MYB102 (350 aa).

HTH myb-type domains lie at K9–I65 and K66–L116. 2 DNA-binding regions (H-T-H motif) span residues W37–L61 and W89–I112.

In terms of tissue distribution, expressed in rosette leaves, cauline leaves and flowers.

Its subcellular location is the nucleus. In terms of biological role, probable transcription factor that may function in osmotic stress and wounding signaling pathways. Contributes to basal resistance against the herbivore Pieris rapae (white cabbage butterfly) feeding. This is Transcription factor MYB102 from Arabidopsis thaliana (Mouse-ear cress).